Consider the following 156-residue polypeptide: Small ribosomal subunit protein uS7c (156 aa).

Belongs to the universal ribosomal protein uS7 family. In terms of assembly, part of the 30S ribosomal subunit.

It localises to the plastid. Its subcellular location is the chloroplast. In terms of biological role, one of the primary rRNA binding proteins, it binds directly to 16S rRNA where it nucleates assembly of the head domain of the 30S subunit. In Tupiella akineta (Green alga), this protein is Small ribosomal subunit protein uS7c (rps7).